The chain runs to 67 residues: Large ribosomal subunit protein uL29 (67 aa).

Belongs to the universal ribosomal protein uL29 family.

This Methanothrix thermoacetophila (strain DSM 6194 / JCM 14653 / NBRC 101360 / PT) (Methanosaeta thermophila) protein is Large ribosomal subunit protein uL29.